Here is a 154-residue protein sequence, read N- to C-terminus: 6,7-dimethyl-8-ribityllumazine synthase (154 aa).

5-amino-6-(D-ribitylamino)uracil contacts are provided by residues 22-23 (FN), 56-58 (SWE), and 80-82 (VLI). 85 to 86 (AT) is a (2S)-2-hydroxy-3-oxobutyl phosphate binding site. The active-site Proton donor is His88. Position 113 (Phe113) interacts with 5-amino-6-(D-ribitylamino)uracil. Arg127 contributes to the (2S)-2-hydroxy-3-oxobutyl phosphate binding site. Residue Lys135 coordinates 5-amino-6-(D-ribitylamino)uracil.

It belongs to the DMRL synthase family. Forms an icosahedral capsid composed of 60 subunits, arranged as a dodecamer of pentamers.

It carries out the reaction (2S)-2-hydroxy-3-oxobutyl phosphate + 5-amino-6-(D-ribitylamino)uracil = 6,7-dimethyl-8-(1-D-ribityl)lumazine + phosphate + 2 H2O + H(+). It functions in the pathway cofactor biosynthesis; riboflavin biosynthesis; riboflavin from 2-hydroxy-3-oxobutyl phosphate and 5-amino-6-(D-ribitylamino)uracil: step 1/2. Its function is as follows. Catalyzes the formation of 6,7-dimethyl-8-ribityllumazine by condensation of 5-amino-6-(D-ribitylamino)uracil with 3,4-dihydroxy-2-butanone 4-phosphate. This is the penultimate step in the biosynthesis of riboflavin. The polypeptide is 6,7-dimethyl-8-ribityllumazine synthase (ribH) (Aquifex aeolicus (strain VF5)).